A 1073-amino-acid polypeptide reads, in one-letter code: Carbamoyl phosphate synthase large chain (1073 aa).

A carboxyphosphate synthetic domain region spans residues 2-403 (PKRTDIKSIL…SLQKALRGLE (402 aa)). ATP is bound by residues Arg129, Arg169, Gly175, Gly176, Glu208, Leu210, Glu215, Gly241, Ile242, His243, Gln285, and Glu299. An ATP-grasp 1 domain is found at 133 to 328 (DVAMKKIGLE…IAKVAAKLAV (196 aa)). Gln285, Glu299, and Asn301 together coordinate Mg(2+). Mn(2+) contacts are provided by Gln285, Glu299, and Asn301. The interval 404–553 (VGATGFDPKV…YSTYEEECEA (150 aa)) is oligomerization domain. Residues 554–936 (NPSTDREKIM…AFAKAQLGSN (383 aa)) form a carbamoyl phosphate synthetic domain region. The region spanning 679-870 (QHAVDRLKLK…LAKVAARVMA (192 aa)) is the ATP-grasp 2 domain. Residues Arg715, His754, Leu756, Glu761, Gly786, Val787, His788, Ser789, Gln829, and Glu841 each contribute to the ATP site. Gln829, Glu841, and Asn843 together coordinate Mg(2+). Mn(2+) is bound by residues Gln829, Glu841, and Asn843. Residues 937 to 1073 (STMKKHGRAL…SVQEMHAQIK (137 aa)) enclose the MGS-like domain. The tract at residues 937 to 1073 (STMKKHGRAL…SVQEMHAQIK (137 aa)) is allosteric domain.

The protein belongs to the CarB family. Composed of two chains; the small (or glutamine) chain promotes the hydrolysis of glutamine to ammonia, which is used by the large (or ammonia) chain to synthesize carbamoyl phosphate. Tetramer of heterodimers (alpha,beta)4. Requires Mg(2+) as cofactor. Mn(2+) serves as cofactor.

The catalysed reaction is hydrogencarbonate + L-glutamine + 2 ATP + H2O = carbamoyl phosphate + L-glutamate + 2 ADP + phosphate + 2 H(+). It catalyses the reaction hydrogencarbonate + NH4(+) + 2 ATP = carbamoyl phosphate + 2 ADP + phosphate + 2 H(+). Its pathway is amino-acid biosynthesis; L-arginine biosynthesis; carbamoyl phosphate from bicarbonate: step 1/1. It participates in pyrimidine metabolism; UMP biosynthesis via de novo pathway; (S)-dihydroorotate from bicarbonate: step 1/3. Large subunit of the glutamine-dependent carbamoyl phosphate synthetase (CPSase). CPSase catalyzes the formation of carbamoyl phosphate from the ammonia moiety of glutamine, carbonate, and phosphate donated by ATP, constituting the first step of 2 biosynthetic pathways, one leading to arginine and/or urea and the other to pyrimidine nucleotides. The large subunit (synthetase) binds the substrates ammonia (free or transferred from glutamine from the small subunit), hydrogencarbonate and ATP and carries out an ATP-coupled ligase reaction, activating hydrogencarbonate by forming carboxy phosphate which reacts with ammonia to form carbamoyl phosphate. This chain is Carbamoyl phosphate synthase large chain, found in Escherichia coli O157:H7.